Reading from the N-terminus, the 181-residue chain is MIDVVLLALALSMDAFAVSIGLGAKNKASPVVLGLKAALYFGVFQALMPLIGYLGGKGMLGWLASFAPWVAAGLLALIAAKMIYESFAEGIEEDISQLTHRVLLLLAIATSIDALAAGFALTVLPVAPLVSCALIGVITAIFSFAGVFIGKRAGTWLESKAELAGGLVLLLIALKIIAVAV.

Transmembrane regions (helical) follow at residues 4–24 (VVLL…GLGA), 31–51 (VVLG…MPLI), 59–79 (MLGW…ALIA), 102–122 (VLLL…FALT), 129–149 (LVSC…GVFI), and 161–181 (AELA…AVAV).

This sequence belongs to the MntP (TC 9.B.29) family.

The protein localises to the cell inner membrane. In terms of biological role, probably functions as a manganese efflux pump. This Saccharophagus degradans (strain 2-40 / ATCC 43961 / DSM 17024) protein is Putative manganese efflux pump MntP.